The following is a 239-amino-acid chain: MALEAAFSMSFCSFSVPKAIFCERETSSFQRITSRAKGIAGESQVQSSDGVETQVKETSPKVFDKLPERNLDTWSGGRETARGLSGSVVRNTVRKDTTLRHISPSSHSTKVRGDKPEISGGEKKAIVDRSKAYVKLKSLGKEVRDAGYVPETKYVLHDIDEEAKEKALMHHSERLAIAFGIINTPPGTTIRVMKNLRICGDCHNFIKILSSIEDREIIVRDNKRFHHFRDGNCSCGDYW.

A chloroplast-targeting transit peptide spans M1–R35. Disordered regions lie at residues A40–S59 and H101–E122. Residues V111–E122 are compositionally biased toward basic and acidic residues. Residues G113–R144 form a type E(+) motif region. Positions D145–W239 are type DYW motif.

The protein belongs to the PPR family. PCMP-H subfamily. In terms of assembly, interacts with CRR4. Zn(2+) serves as cofactor.

It localises to the plastid. The protein resides in the chloroplast. In terms of biological role, plays a major role in single RNA editing events in chloroplasts. Acts as a site-recognition transacting factor involved in the edition of the site 1 of ndhD (ndhD-1 site corresponding to cytidine-2), which is a plastid-encoded subunit of the NADH-plastoquinone oxidoreductase. The interaction with CRR4 is required for its function in editing the ndhD-1 site. The sequence is that of Pentatricopeptide repeat-containing protein DWY1, chloroplastic from Arabidopsis thaliana (Mouse-ear cress).